Reading from the N-terminus, the 437-residue chain is Enolase (437 aa).

(2R)-2-phosphoglycerate is bound at residue glutamine 162. Residue glutamate 204 is the Proton donor of the active site. Residues aspartate 251, glutamate 297, and aspartate 324 each contribute to the Mg(2+) site. Residues lysine 349, arginine 378, serine 379, and lysine 400 each coordinate (2R)-2-phosphoglycerate. Lysine 349 (proton acceptor) is an active-site residue.

The protein belongs to the enolase family. The cofactor is Mg(2+).

The protein resides in the cytoplasm. Its subcellular location is the secreted. The protein localises to the cell surface. It catalyses the reaction (2R)-2-phosphoglycerate = phosphoenolpyruvate + H2O. It participates in carbohydrate degradation; glycolysis; pyruvate from D-glyceraldehyde 3-phosphate: step 4/5. Functionally, catalyzes the reversible conversion of 2-phosphoglycerate (2-PG) into phosphoenolpyruvate (PEP). It is essential for the degradation of carbohydrates via glycolysis. This Chlorobium limicola (strain DSM 245 / NBRC 103803 / 6330) protein is Enolase.